The following is an 842-amino-acid chain: Type VI secretion system spike protein VgrG2a (842 aa).

Residues 265–291 (RSGAGRPFSESRLRGHRRDARVASVSG) are disordered.

The protein belongs to the VgrG protein family.

Its function is as follows. Part of the H2 type VI secretion system (H2-T6SS) specialized secretion system, which delivers several virulence factors in both prokaryotic and eukaryotic cells during infection. May form the spike at the tip of the elongating tube formed by haemolysin co-regulated protein 2a/Hcp2a. In turn, may allow the delivery of the Tle4 antibacterial toxin to target cells where it exerts its toxicity. Also promotes the release of VgrG2b toxin to the host cell. The chain is Type VI secretion system spike protein VgrG2a from Pseudomonas aeruginosa (strain ATCC 15692 / DSM 22644 / CIP 104116 / JCM 14847 / LMG 12228 / 1C / PRS 101 / PAO1).